The primary structure comprises 308 residues: 4-hydroxy-3-methylbut-2-enyl diphosphate reductase (308 aa).

Cys-12 contacts [4Fe-4S] cluster. (2E)-4-hydroxy-3-methylbut-2-enyl diphosphate contacts are provided by His-41 and His-74. Dimethylallyl diphosphate contacts are provided by His-41 and His-74. 2 residues coordinate isopentenyl diphosphate: His-41 and His-74. Cys-96 contacts [4Fe-4S] cluster. His-124 is a binding site for (2E)-4-hydroxy-3-methylbut-2-enyl diphosphate. His-124 provides a ligand contact to dimethylallyl diphosphate. Isopentenyl diphosphate is bound at residue His-124. The Proton donor role is filled by Glu-126. Thr-166 is a binding site for (2E)-4-hydroxy-3-methylbut-2-enyl diphosphate. [4Fe-4S] cluster is bound at residue Cys-196. (2E)-4-hydroxy-3-methylbut-2-enyl diphosphate is bound by residues Ser-224, Ser-225, Asn-226, and Ser-268. Residues Ser-224, Ser-225, Asn-226, and Ser-268 each contribute to the dimethylallyl diphosphate site. The isopentenyl diphosphate site is built by Ser-224, Ser-225, Asn-226, and Ser-268.

The protein belongs to the IspH family. [4Fe-4S] cluster is required as a cofactor.

The enzyme catalyses isopentenyl diphosphate + 2 oxidized [2Fe-2S]-[ferredoxin] + H2O = (2E)-4-hydroxy-3-methylbut-2-enyl diphosphate + 2 reduced [2Fe-2S]-[ferredoxin] + 2 H(+). It carries out the reaction dimethylallyl diphosphate + 2 oxidized [2Fe-2S]-[ferredoxin] + H2O = (2E)-4-hydroxy-3-methylbut-2-enyl diphosphate + 2 reduced [2Fe-2S]-[ferredoxin] + 2 H(+). Its pathway is isoprenoid biosynthesis; dimethylallyl diphosphate biosynthesis; dimethylallyl diphosphate from (2E)-4-hydroxy-3-methylbutenyl diphosphate: step 1/1. The protein operates within isoprenoid biosynthesis; isopentenyl diphosphate biosynthesis via DXP pathway; isopentenyl diphosphate from 1-deoxy-D-xylulose 5-phosphate: step 6/6. Its function is as follows. Catalyzes the conversion of 1-hydroxy-2-methyl-2-(E)-butenyl 4-diphosphate (HMBPP) into a mixture of isopentenyl diphosphate (IPP) and dimethylallyl diphosphate (DMAPP). Acts in the terminal step of the DOXP/MEP pathway for isoprenoid precursor biosynthesis. The chain is 4-hydroxy-3-methylbut-2-enyl diphosphate reductase from Vesicomyosocius okutanii subsp. Calyptogena okutanii (strain HA).